A 215-amino-acid chain; its full sequence is Cytochrome b6 (215 aa).

Residues 32-52 (IFYCLGGITLTCFLVQVATGF) form a helical membrane-spanning segment. Cys35 contributes to the heme c binding site. Residues His86 and His100 each coordinate heme b. The next 3 membrane-spanning stretches (helical) occupy residues 90-110 (ASMM…TGGF), 116-136 (LTWV…VTGY), and 186-206 (LHTF…FLMI). 2 residues coordinate heme b: His187 and His202.

Belongs to the cytochrome b family. PetB subfamily. In terms of assembly, the 4 large subunits of the cytochrome b6-f complex are cytochrome b6, subunit IV (17 kDa polypeptide, PetD), cytochrome f and the Rieske protein, while the 4 small subunits are PetG, PetL, PetM and PetN. The complex functions as a dimer. It depends on heme b as a cofactor. Heme c is required as a cofactor.

It is found in the plastid. It localises to the chloroplast thylakoid membrane. In terms of biological role, component of the cytochrome b6-f complex, which mediates electron transfer between photosystem II (PSII) and photosystem I (PSI), cyclic electron flow around PSI, and state transitions. The polypeptide is Cytochrome b6 (Pinus thunbergii (Japanese black pine)).